We begin with the raw amino-acid sequence, 327 residues long: G protein pathway suppressor 2 (327 aa).

A coiled-coil region spans residues 14 to 109 (MARALHRHIM…RRRKEQSDLT (96 aa)). The tract at residues 26–65 (RERKRQEEEEVDKMMEQKMKEEQERRKKKEMEERMSLEET) is disordered. Glycyl lysine isopeptide (Lys-Gly) (interchain with G-Cter in SUMO1) cross-links involve residues Lys45 and Lys71. The interaction with SUMO stretch occupies residues 61–94 (SLEETKEQILKLEEKLLALQEEKHQLFLQLKKVL). Disordered regions lie at residues 177 to 208 (HGQF…SPSQ) and 253 to 327 (QKQM…FYHK). Polar residues predominate over residues 253–271 (QKQMEHANQQTGFSDSSSL). Position 312 is an asymmetric dimethylarginine (Arg312). Over residues 317–327 (QHSQNPRFYHK) the composition is skewed to polar residues. At Arg323 the chain carries Asymmetric dimethylarginine; alternate. Position 323 is an omega-N-methylarginine; alternate (Arg323).

In terms of assembly, component of the N-Cor repressor complex, at least composed of NCOR1, NCOR2, HDAC3, TBL1X, TBL1R, CORO2A and GPS2. Interacts (when sumoylated at Lys-71) with TBL1X; leading to protect GPS2 from degradation by the proteasome. Interacts with UBE2N; leading to inhibit UBE2N/Ubc13 activity. Interacts with TRAF1. Interacts with TRAF2. Interacts with TRAF6. Interacts with PPARG (when in the liganded conformation). Interacts with (sumoylated) NR1H2; interaction with sumoylated NR1H2 and NR5A2 onto hepatic acute phase protein promoters prevents N-Cor corepressor complex dissociation. Interacts with (sumoylated) NR5A2; interaction with sumoylated NR1H2 and NR5A2 onto hepatic acute phase protein promoters prevents N-Cor corepressor complex dissociation. Interacts with NR1H3. Interacts with RFX4. Interacts with ANKRD26. As to quaternary structure, (Microbial infection) Interacts (via coiled coil domain) with hepatitis C virus (HCV) NS5A. In terms of processing, sumoylation regulates its subcellular location. Sumoylation at Lys-45 and Lys-71 regulates the shuttling between the cytoplasm and the nucleus. Sumoylation at Lys-71 is required for interaction with TBL1X. Sumoylated at Lys-45 and Lys-71 in mitochondrion. Desumoylation by SENP1 leads to relocation from the mitochondria to the nucleus. Post-translationally, ubiquitinated at the C-terminus by SIAH2; leading to its degradation by the proteasome. Interaction with TBL1X and methylation at Arg-323 protect GPS2 against ubiquitination and degradation. Methylated at Arg-312 and Arg-323 by PRMT6. Methylation at Arg-323 protects from degradation by the proteasome. Widely expressed.

Its subcellular location is the nucleus. The protein resides in the mitochondrion. It is found in the cytoplasm. The protein localises to the cytosol. In terms of biological role, key regulator of inflammation, lipid metabolism and mitochondrion homeostasis that acts by inhibiting the activity of the ubiquitin-conjugating enzyme UBE2N/Ubc13, thereby inhibiting 'Lys-63'-linked ubiquitination. In the nucleus, can both acts as a corepressor and coactivator of transcription, depending on the context. Acts as a transcription coactivator in adipocytes by promoting the recruitment of PPARG to promoters: acts by inhibiting the activity of the ubiquitin-conjugating enzyme UBE2N/Ubc13, leading to stabilization of KDM4A and subsequent histone H3 'Lys-9' (H3K9) demethylation. Promotes cholesterol efflux by acting as a transcription coactivator. Acts as a regulator of B-cell development by inhibiting UBE2N/Ubc13, thereby restricting the activation of Toll-like receptors (TLRs) and B-cell antigen receptors (BCRs) signaling pathways. Acts as a key mediator of mitochondrial stress response: in response to mitochondrial depolarization, relocates from the mitochondria to the nucleus following desumoylation and specifically promotes expression of nuclear-encoded mitochondrial genes. Promotes transcription of nuclear-encoded mitochondrial genes by inhibiting UBE2N/Ubc13. Can also act as a corepressor as part of the N-Cor repressor complex by repressing active PPARG. Plays an anti-inflammatory role in macrophages and is required for insulin sensitivity by acting as a corepressor. Plays an anti-inflammatory role during the hepatic acute phase response by interacting with sumoylated NR1H2 and NR5A2 proteins, thereby preventing N-Cor corepressor complex dissociation. In the cytosol, also plays a non-transcriptional role by regulating insulin signaling and pro-inflammatory pathways. In the cytoplasm, acts as a negative regulator of inflammation by inhibiting the pro-inflammatory TNF-alpha pathway; acts by repressing UBE2N/Ubc13 activity. In the cytoplasm of adipocytes, restricts the activation of insulin signaling via inhibition of UBE2N/Ubc13-mediated ubiquitination of AKT. Able to suppress G-protein- and mitogen-activated protein kinase-mediated signal transduction. Acts as a tumor-suppressor in liposarcoma. Its function is as follows. (Microbial infection) Required for efficient replication of hepatitis C virus (HCV) by promoting the interaction between VAPA and HCV virus protein NS5A. This Homo sapiens (Human) protein is G protein pathway suppressor 2.